Consider the following 698-residue polypeptide: Auxin response factor 22 (698 aa).

The segment at residues 128–230 (FAKTLTQSDA…ELCVGIRRAK (103 aa)) is a DNA-binding region (TF-B3). Residues 549–577 (TSSGSTETLSPGVTGNSSPNGNAHKTGNA) are compositionally biased toward polar residues. A disordered region spans residues 549–579 (TSSGSTETLSPGVTGNSSPNGNAHKTGNASD). The PB1 domain maps to 603–683 (AGHCKVFMES…RRLTIIAGDR (81 aa)).

It belongs to the ARF family. In terms of assembly, homodimers and heterodimers. As to expression, expressed in roots, culms, leaves and young panicles.

It is found in the nucleus. Its function is as follows. Auxin response factors (ARFs) are transcriptional factors that bind specifically to the DNA sequence 5'-TGTCTC-3' found in the auxin-responsive promoter elements (AuxREs). The protein is Auxin response factor 22 (ARF22) of Oryza sativa subsp. japonica (Rice).